The chain runs to 435 residues: Putative GMP synthase [glutamine-hydrolyzing] 2 (435 aa).

Residues 1-120 (MKQDMIVILD…VFDTCQAEAN (120 aa)) enclose the Glutamine amidotransferase type-1; truncated domain. Positions 121–310 (WNMANFVNDQ…LGLPYEMVYR (190 aa)) constitute a GMPS ATP-PPase domain. 148–154 (SGGVDSS) contributes to the ATP binding site.

In terms of assembly, homodimer.

It catalyses the reaction XMP + L-glutamine + ATP + H2O = GMP + L-glutamate + AMP + diphosphate + 2 H(+). Its pathway is purine metabolism; GMP biosynthesis; GMP from XMP (L-Gln route): step 1/1. Functionally, catalyzes the synthesis of GMP from XMP. The protein is Putative GMP synthase [glutamine-hydrolyzing] 2 (guaA2) of Bacteroides thetaiotaomicron (strain ATCC 29148 / DSM 2079 / JCM 5827 / CCUG 10774 / NCTC 10582 / VPI-5482 / E50).